The chain runs to 2292 residues: Protein Ycf2 (2292 aa).

An ATP-binding site is contributed by 1640-1647 (GSIGIGRS).

This sequence belongs to the Ycf2 family.

It is found in the plastid. It localises to the chloroplast stroma. Its function is as follows. Probable ATPase of unknown function. Its presence in a non-photosynthetic plant (Epifagus virginiana) and experiments in tobacco indicate that it has an essential function which is probably not related to photosynthesis. In Liriodendron tulipifera (Tuliptree), this protein is Protein Ycf2.